The chain runs to 359 residues: Putative nucleotidyltransferase MAB21L1 (359 aa).

A ribonucleoside 5'-triphosphate-binding positions include 23–24 (RK) and 63–66 (YEGL). 2 residues coordinate Mg(2+): E73 and E75. A ribonucleoside 5'-triphosphate is bound by residues K248 and 252–255 (SILK).

Belongs to the mab-21 family. As to quaternary structure, monomer. Homodecamer; composed of 2 back to back homopentamers. The protein may exist as monomer in solution and oiligomerizes upon ligand binding.

Its subcellular location is the nucleus. Its function is as follows. Putative nucleotidyltransferase required for several aspects of embryonic development including normal development of the eye. It is unclear whether it displays nucleotidyltransferase activity in vivo. Binds single-stranded RNA (ssRNA). The polypeptide is Putative nucleotidyltransferase MAB21L1 (MAB21L1) (Bos taurus (Bovine)).